The following is a 337-amino-acid chain: DNA-directed RNA polymerase subunit alpha (337 aa).

The alpha N-terminal domain (alpha-NTD) stretch occupies residues 1–233 (MVREEVAVST…DLFIPFLHAE (233 aa)). Positions 266-337 (GIALKCIFID…FTIDLPKNKF (72 aa)) are alpha C-terminal domain (alpha-CTD).

The protein belongs to the RNA polymerase alpha chain family. In plastids the minimal PEP RNA polymerase catalytic core is composed of four subunits: alpha, beta, beta', and beta''. When a (nuclear-encoded) sigma factor is associated with the core the holoenzyme is formed, which can initiate transcription.

It localises to the plastid. It is found in the chloroplast. The catalysed reaction is RNA(n) + a ribonucleoside 5'-triphosphate = RNA(n+1) + diphosphate. Its function is as follows. DNA-dependent RNA polymerase catalyzes the transcription of DNA into RNA using the four ribonucleoside triphosphates as substrates. The protein is DNA-directed RNA polymerase subunit alpha of Liriodendron tulipifera (Tuliptree).